A 358-amino-acid polypeptide reads, in one-letter code: uncharacterized protein (358 aa).

This sequence belongs to the SMP-30/CGR1 family.

This is an uncharacterized protein from Saccharomyces cerevisiae (strain ATCC 204508 / S288c) (Baker's yeast).